A 421-amino-acid polypeptide reads, in one-letter code: Stemmadenine O-acetyltransferase (421 aa).

A disordered region spans residues 1–21 (MAPQMQILSEELIQPSSPTPQ). Residues H160 and D362 each act as proton acceptor in the active site.

Belongs to the plant acyltransferase family. As to quaternary structure, monomer. As to expression, expressed in leaf epidermis.

The catalysed reaction is 15alpha-stemmadenine + acetyl-CoA = O-acetyl-15alpha-stemmadenine + CoA. It functions in the pathway alkaloid biosynthesis. Functionally, component of iboga and aspidosperma monoterpenoid indole alkaloids (MIAs, e.g. tabersonine and catharanthine) biosynthesis pathway from 19E-geissoschizine. Acetyltransferase that catalyzes the formation of O-acetylstemmadenine from stemmadenine. The polypeptide is Stemmadenine O-acetyltransferase (Catharanthus roseus (Madagascar periwinkle)).